A 447-amino-acid polypeptide reads, in one-letter code: Serine/threonine-protein phosphatase 2A 55 kDa regulatory subunit B alpha isoform (447 aa).

Alanine 2 carries the post-translational modification N-acetylalanine. WD repeat units follow at residues 11 to 80 (QWCF…FQSH), 94 to 174 (EKIN…IFAN), 175 to 218 (AHTY…VDIK), 227 to 270 (EVIT…KLFE), 288 to 325 (ISDV…TYQV), 347 to 381 (ECCW…TLEA), and 414 to 446 (DFNK…QDKV).

The protein belongs to the phosphatase 2A regulatory subunit B family. As to quaternary structure, PP2A consists of a common heterodimeric core enzyme, composed of a 36 kDa catalytic subunit (subunit C) and a 65 kDa constant regulatory subunit (PR65 or subunit A), that associates with a variety of regulatory subunits. Proteins that associate with the core dimer include three families of regulatory subunits B (the R2/B/PR55/B55, R3/B''/PR72/PR130/PR59 and R5/B'/B56 families), the 48 kDa variable regulatory subunit, viral proteins, and cell signaling molecules. Interacts with the PP2A C catalytic subunit PPP2CA. Interacts with the PP2A A subunit PPP2R1A. Found in a complex with at least ARL2, PPP2CB, PPP2R1A, PPP2R2A, PPP2R5E and TBCD. Interacts with MFHAS1; the interaction is direct. Interacts with PABIR1/FAM122A (via its N-terminus); the interaction is direct and inhibits PP2A activity. Interacts with ARPP19; the interaction is direct and inhibits PP2A activity. Interacts with CRTC3. As to expression, brain.

Its function is as follows. Substrate-recognition subunit of protein phosphatase 2A (PP2A) that plays a key role in cell cycle by controlling mitosis entry and exit. Involved in chromosome clustering during late mitosis by mediating dephosphorylation of MKI67. Essential for serine/threonine-protein phosphatase 2A-mediated dephosphorylation of WEE1, preventing its ubiquitin-mediated proteolysis, increasing WEE1 protein levels, and promoting the G2/M checkpoint. The sequence is that of Serine/threonine-protein phosphatase 2A 55 kDa regulatory subunit B alpha isoform (Ppp2r2a) from Rattus norvegicus (Rat).